The primary structure comprises 361 residues: UDP-3-O-acylglucosamine N-acyltransferase (361 aa).

H264 functions as the Proton acceptor in the catalytic mechanism.

The protein belongs to the transferase hexapeptide repeat family. LpxD subfamily. As to quaternary structure, homotrimer.

It catalyses the reaction a UDP-3-O-[(3R)-3-hydroxyacyl]-alpha-D-glucosamine + a (3R)-hydroxyacyl-[ACP] = a UDP-2-N,3-O-bis[(3R)-3-hydroxyacyl]-alpha-D-glucosamine + holo-[ACP] + H(+). Its pathway is bacterial outer membrane biogenesis; LPS lipid A biosynthesis. Its function is as follows. Catalyzes the N-acylation of UDP-3-O-acylglucosamine using 3-hydroxyacyl-ACP as the acyl donor. Is involved in the biosynthesis of lipid A, a phosphorylated glycolipid that anchors the lipopolysaccharide to the outer membrane of the cell. This chain is UDP-3-O-acylglucosamine N-acyltransferase, found in Bordetella avium (strain 197N).